Reading from the N-terminus, the 268-residue chain is Thiazole synthase (268 aa).

The Schiff-base intermediate with DXP role is filled by Lys108. Residues Gly169, Ala195–Gly196, and Asn217–Ser218 contribute to the 1-deoxy-D-xylulose 5-phosphate site. Residues Arg248 to Asn268 form a disordered region. Over residues Ala255 to Asn268 the composition is skewed to polar residues.

The protein belongs to the ThiG family. As to quaternary structure, homotetramer. Forms heterodimers with either ThiH or ThiS.

It is found in the cytoplasm. The catalysed reaction is [ThiS sulfur-carrier protein]-C-terminal-Gly-aminoethanethioate + 2-iminoacetate + 1-deoxy-D-xylulose 5-phosphate = [ThiS sulfur-carrier protein]-C-terminal Gly-Gly + 2-[(2R,5Z)-2-carboxy-4-methylthiazol-5(2H)-ylidene]ethyl phosphate + 2 H2O + H(+). It participates in cofactor biosynthesis; thiamine diphosphate biosynthesis. In terms of biological role, catalyzes the rearrangement of 1-deoxy-D-xylulose 5-phosphate (DXP) to produce the thiazole phosphate moiety of thiamine. Sulfur is provided by the thiocarboxylate moiety of the carrier protein ThiS. In vitro, sulfur can be provided by H(2)S. The sequence is that of Thiazole synthase from Prochlorococcus marinus (strain NATL1A).